Reading from the N-terminus, the 85-residue chain is Large ribosomal subunit protein bL27 (85 aa).

Residues 1 to 10 show a composition bias toward gly residues; it reads MAQKKGGGST. The segment at 1 to 21 is disordered; it reads MAQKKGGGSTRNGRDSQPKML.

The protein belongs to the bacterial ribosomal protein bL27 family.

This is Large ribosomal subunit protein bL27 from Polaromonas naphthalenivorans (strain CJ2).